A 731-amino-acid polypeptide reads, in one-letter code: Catalase-peroxidase (731 aa).

Residues 1 to 24 (MSTEPNCPFSGNARKHTAAGAPSN) form a disordered region. Residues 96–219 (WHSAGTYRVS…LGAVQMGLIY (124 aa)) constitute a cross-link (tryptophyl-tyrosyl-methioninium (Trp-Tyr) (with M-245)). Histidine 97 acts as the Proton acceptor in catalysis. A cross-link (tryptophyl-tyrosyl-methioninium (Tyr-Met) (with W-96)) is located at residues 219 to 245 (YVNPEGPNGNPDPIAAARDIRETFARM). Position 260 (histidine 260) interacts with heme b. The segment at 339–365 (GAQQWKPKGDAGAGTVPDAHDPSKRHA) is disordered.

This sequence belongs to the peroxidase family. Peroxidase/catalase subfamily. As to quaternary structure, homodimer or homotetramer. Requires heme b as cofactor. In terms of processing, formation of the three residue Trp-Tyr-Met cross-link is important for the catalase, but not the peroxidase activity of the enzyme.

It carries out the reaction H2O2 + AH2 = A + 2 H2O. It catalyses the reaction 2 H2O2 = O2 + 2 H2O. Bifunctional enzyme with both catalase and broad-spectrum peroxidase activity. In Polaromonas sp. (strain JS666 / ATCC BAA-500), this protein is Catalase-peroxidase.